We begin with the raw amino-acid sequence, 501 residues long: Protein DETOXIFICATION 37 (501 aa).

The next 12 membrane-spanning stretches (helical) occupy residues 44–64 (MMIEMKFLFHLAAPAIFVYVI), 84–104 (LAAASLGNSGFNMFTYGLLLG), 134–154 (VVLILTCLPMSFLFLFSNPIL), 163–183 (VATLASVFVYGMIPVIFAYAV), 200–220 (SAYISAATLVIHLILSWIAVY), 222–242 (LGYGLLALSLIHSFSWWIIVV), 280–300 (AVMLCLESWYSQILVLLAGLL), 310–330 (LAICMSISAISFMVSVGFNAA), 352–372 (VVTTGVSFLLSVFEAIVVLSW), 396–416 (FLAITIVLNGIQPVLSGVAVG), 422–442 (FVAYVNIGCYYVVGIPVGFVL), and 453–473 (IWTGMIGGTLMQTIILVIVTL).

It belongs to the multi antimicrobial extrusion (MATE) (TC 2.A.66.1) family.

It is found in the membrane. In Arabidopsis thaliana (Mouse-ear cress), this protein is Protein DETOXIFICATION 37.